The chain runs to 296 residues: Bifunctional protein FolD (296 aa).

Residues 169–171 (GRG), Thr196, and Val237 contribute to the NADP(+) site.

It belongs to the tetrahydrofolate dehydrogenase/cyclohydrolase family. As to quaternary structure, homodimer.

The catalysed reaction is (6R)-5,10-methylene-5,6,7,8-tetrahydrofolate + NADP(+) = (6R)-5,10-methenyltetrahydrofolate + NADPH. It catalyses the reaction (6R)-5,10-methenyltetrahydrofolate + H2O = (6R)-10-formyltetrahydrofolate + H(+). The protein operates within one-carbon metabolism; tetrahydrofolate interconversion. In terms of biological role, catalyzes the oxidation of 5,10-methylenetetrahydrofolate to 5,10-methenyltetrahydrofolate and then the hydrolysis of 5,10-methenyltetrahydrofolate to 10-formyltetrahydrofolate. This Kocuria rhizophila (strain ATCC 9341 / DSM 348 / NBRC 103217 / DC2201) protein is Bifunctional protein FolD.